A 220-amino-acid chain; its full sequence is Deoxyribose-phosphate aldolase (220 aa).

Asp89 serves as the catalytic Proton donor/acceptor. Lys151 functions as the Schiff-base intermediate with acetaldehyde in the catalytic mechanism. Lys180 functions as the Proton donor/acceptor in the catalytic mechanism.

This sequence belongs to the DeoC/FbaB aldolase family. DeoC type 1 subfamily.

The protein resides in the cytoplasm. The catalysed reaction is 2-deoxy-D-ribose 5-phosphate = D-glyceraldehyde 3-phosphate + acetaldehyde. It functions in the pathway carbohydrate degradation; 2-deoxy-D-ribose 1-phosphate degradation; D-glyceraldehyde 3-phosphate and acetaldehyde from 2-deoxy-alpha-D-ribose 1-phosphate: step 2/2. Catalyzes a reversible aldol reaction between acetaldehyde and D-glyceraldehyde 3-phosphate to generate 2-deoxy-D-ribose 5-phosphate. The sequence is that of Deoxyribose-phosphate aldolase from Lactococcus lactis subsp. cremoris (strain SK11).